We begin with the raw amino-acid sequence, 382 residues long: D-galactonate dehydratase (382 aa).

A Mg(2+)-binding site is contributed by Asp-183. The Proton donor role is filled by His-185. Mg(2+) is bound by residues Glu-209 and Glu-235. His-285 functions as the Proton acceptor in the catalytic mechanism.

The protein belongs to the mandelate racemase/muconate lactonizing enzyme family. GalD subfamily. Requires Mg(2+) as cofactor.

The enzyme catalyses D-galactonate = 2-dehydro-3-deoxy-D-galactonate + H2O. It participates in carbohydrate acid metabolism; D-galactonate degradation; D-glyceraldehyde 3-phosphate and pyruvate from D-galactonate: step 1/3. Catalyzes the dehydration of D-galactonate to 2-keto-3-deoxy-D-galactonate. In Klebsiella pneumoniae subsp. pneumoniae (strain ATCC 700721 / MGH 78578), this protein is D-galactonate dehydratase.